The primary structure comprises 596 residues: Proton channel OTOP3 (596 aa).

Low complexity predominate over residues Met-1 to Ser-21. The segment at Met-1–Ala-59 is disordered. Topologically, residues Met-1–Gln-88 are cytoplasmic. Phosphoserine occurs at positions 21 and 23. Over residues Ala-43–Ala-59 the composition is skewed to basic and acidic residues. A helical transmembrane segment spans residues Leu-89–Met-109. Topologically, residues Ile-110–Gly-119 are extracellular. The helical transmembrane segment at Asp-120 to Thr-143 threads the bilayer. At Thr-144 to Pro-159 the chain is on the cytoplasmic side. Residues Leu-160–Val-181 form a helical membrane-spanning segment. At Gly-182–Gln-193 the chain is on the extracellular side. Residues Leu-194–Cys-217 traverse the membrane as a helical segment. At Lys-218–Thr-225 the chain is on the cytoplasmic side. Residues Asn-226 to Thr-248 traverse the membrane as a helical segment. At Asn-249–Pro-295 the chain is on the extracellular side. Residues Phe-296–Trp-312 traverse the membrane as a helical segment. At Lys-313–Ile-338 the chain is on the cytoplasmic side. Residues Phe-339–Phe-358 form a helical membrane-spanning segment. At Gln-359–Phe-372 the chain is on the extracellular side. The helical transmembrane segment at Thr-373–Ala-395 threads the bilayer. The Cytoplasmic segment spans residues Ile-396 to Ser-413. Residues Leu-414–Val-435 traverse the membrane as a helical segment. The Extracellular segment spans residues Ala-436–Leu-446. A helical transmembrane segment spans residues Asn-447–Ile-469. Residues Glu-470–Glu-529 are Cytoplasmic-facing. Residues Ile-530–Phe-547 form a helical membrane-spanning segment. Residues Gly-548–Ile-566 lie on the Extracellular side of the membrane. A helical membrane pass occupies residues Trp-567–Leu-589. At Val-590–Ala-596 the chain is on the cytoplasmic side.

It belongs to the otopetrin family. In terms of assembly, homodimer.

The protein resides in the cell membrane. The enzyme catalyses H(+)(in) = H(+)(out). Activated by extracellular acidification. Activated by Zn(2+) under non-acidic conditions. In terms of biological role, proton-selective channel gated by extracellular protons. The chain is Proton channel OTOP3 from Homo sapiens (Human).